Reading from the N-terminus, the 57-residue chain is uncharacterized protein (57 aa).

This is an uncharacterized protein from Escherichia coli.